Reading from the N-terminus, the 60-residue chain is Myrmicitoxin(1)-Pr4c (60 aa).

Residues 1 to 23 (MKAIIFLFAVLTVVAIIIPIISG) form the signal peptide. Residues 24 to 33 (EPNAGPHAAS) constitute a propeptide that is removed on maturation. Position 59 is a glutamine amide (Gln-59).

Belongs to the formicidae venom clade 2 family. Expressed by the venom gland.

The protein resides in the secreted. Its function is as follows. Toxin that causes a rapid and irreversible paralysis when intrathoracically injected into insects (blowflies). Does not cause spontaneous nocifensive behaviors by intraplantar injection in mice. The polypeptide is Myrmicitoxin(1)-Pr4c (Pogonomyrmex rugosus (Desert harvester ant)).